Here is a 279-residue protein sequence, read N- to C-terminus: Acetyl-coenzyme A carboxylase carboxyl transferase subunit beta (279 aa).

The CoA carboxyltransferase N-terminal domain maps to methionine 23 to proline 279. Zn(2+) is bound by residues cysteine 27, cysteine 30, cysteine 46, and cysteine 49. The segment at cysteine 27–cysteine 49 adopts a C4-type zinc-finger fold.

The protein belongs to the AccD/PCCB family. In terms of assembly, acetyl-CoA carboxylase is a heterohexamer composed of biotin carboxyl carrier protein (AccB), biotin carboxylase (AccC) and two subunits each of ACCase subunit alpha (AccA) and ACCase subunit beta (AccD). Requires Zn(2+) as cofactor.

The protein resides in the cytoplasm. It carries out the reaction N(6)-carboxybiotinyl-L-lysyl-[protein] + acetyl-CoA = N(6)-biotinyl-L-lysyl-[protein] + malonyl-CoA. Its pathway is lipid metabolism; malonyl-CoA biosynthesis; malonyl-CoA from acetyl-CoA: step 1/1. Functionally, component of the acetyl coenzyme A carboxylase (ACC) complex. Biotin carboxylase (BC) catalyzes the carboxylation of biotin on its carrier protein (BCCP) and then the CO(2) group is transferred by the transcarboxylase to acetyl-CoA to form malonyl-CoA. The sequence is that of Acetyl-coenzyme A carboxylase carboxyl transferase subunit beta from Chlorobium phaeobacteroides (strain DSM 266 / SMG 266 / 2430).